The chain runs to 288 residues: Ras-like protein 1 (288 aa).

GTP is bound at residue 11-18; the sequence is GGGGVGKS. The short motif at 33 to 41 is the Effector region element; the sequence is YDPTIEDSY. Residues 58 to 62 and 117 to 120 each bind GTP; these read DTAGQ and NKCD. The segment at 176 to 288 is disordered; sequence EKQQQQQQQQ…KSKNGCCVIV (113 aa). 2 stretches are compositionally biased toward low complexity: residues 178–216 and 246–281; these read QQQQQQQQQNANQQGQDQYGQQKDNQQSQFNNQINNNNN and PNQSQSQRQQQQQQQEPQQQSENQFSGQKQSSSKSK. C284 carries S-palmitoyl cysteine lipidation. Residue C285 is modified to Cysteine methyl ester. C285 carries S-farnesyl cysteine lipidation. A propeptide spans 286-288 (removed in mature form); that stretch reads VIV.

The protein belongs to the small GTPase superfamily. Ras family.

The protein localises to the cell membrane. The catalysed reaction is GTP + H2O = GDP + phosphate + H(+). Alternates between an inactive form bound to GDP and an active form bound to GTP. Activated by a guanine nucleotide-exchange factor (GEF) and inactivated by a GTPase-activating protein (GAP). In terms of biological role, required for the regulation of both a MAP kinase signaling pathway and a cAMP signaling pathway. The activation of these pathways contributes to the pathogenicity of the cells through the induction of the morphological transition from the yeast to the polarized filamentous form. In Candida albicans (strain WO-1) (Yeast), this protein is Ras-like protein 1 (RAS1).